The following is a 392-amino-acid chain: Multidrug resistance protein MdtL (392 aa).

Transmembrane regions (helical) follow at residues 4-24 (FLLC…MYLV), 38-58 (AQLH…MLFA), 70-90 (VAIV…QAHA), 95-115 (LVGR…AFAI), 131-151 (LLNG…HLIM), 158-178 (SLFY…VFIL), 209-229 (ILIT…SPVL), 246-266 (ALMA…LSLF), 270-290 (TLML…SLAT), 294-314 (LTLI…GVAM), 331-351 (VLGI…AIIG), and 357-377 (MLIG…LVVT).

It belongs to the major facilitator superfamily. DHA1 family. MdtL (TC 2.A.1.2.22) subfamily.

The protein resides in the cell inner membrane. In Klebsiella pneumoniae (strain 342), this protein is Multidrug resistance protein MdtL.